The following is a 201-amino-acid chain: Probable quinol oxidase subunit 3 (201 aa).

Helical transmembrane passes span 20 to 40 (LGFW…FATL), 62 to 82 (LILI…IAIY), 91 to 111 (LMMF…GFEI), 133 to 153 (FFIL…WVIC), and 172 to 192 (FIVS…FTAV).

This sequence belongs to the cytochrome c oxidase subunit 3 family.

The protein resides in the cell membrane. It carries out the reaction 2 a quinol + O2 = 2 a quinone + 2 H2O. Its function is as follows. Catalyzes quinol oxidation with the concomitant reduction of oxygen to water. The chain is Probable quinol oxidase subunit 3 (qoxC) from Staphylococcus epidermidis (strain ATCC 35984 / DSM 28319 / BCRC 17069 / CCUG 31568 / BM 3577 / RP62A).